The following is a 644-amino-acid chain: Leucine-rich repeat protein soc-2 homolog (644 aa).

The segment covering 1–19 has biased composition (low complexity); the sequence is MNLCSSGATASTTSLSSTG. Disordered stretches follow at residues 1–60 and 82–150; these read MNLC…APTL and NSPA…IQAD. Gly residues-rich tracts occupy residues 26 to 50 and 87 to 96; these read GVPG…GGKA and GAGGASGFTG. The segment covering 99–117 has biased composition (polar residues); the sequence is QQPTGSNGHSHLHNENNAN. LRR repeat units lie at residues 164–185, 187–208, 210–231, 233–254, 256–277, 279–300, 302–323, 325–346, 348–370, 371–392, 395–416, 419–440, 443–464, 466–487, 489–510, 512–533, 535–556, 558–579, 581–603, and 605–626; these read GIKR…VKEC, HLTE…IGCL, SLRN…LQNC, QLKV…IYRL, SLTT…LRQL, NLTM…IGAL, NLTT…IGNC, NLSA…IGNL, SLVR…KNCK, SMDE…MLAS, GLTT…GPAQ, NVYS…IFSR, GLTK…IGTW, NMVE…IMNL, NLEI…IGNL, RLRI…IGLL, ELQR…IGHL, NLTH…IGSL, SLEN…LALC, and NLKY…IQAG.

This sequence belongs to the SHOC2 family.

Acts as a Ras effector and participates in MAPK pathway activation. Probably acts as a regulatory subunit of protein phosphatase that specifically dephosphorylates Raf kinase and stimulate Raf activity at specialized signaling complexes upon Ras activation. The polypeptide is Leucine-rich repeat protein soc-2 homolog (Sur-8) (Drosophila erecta (Fruit fly)).